The chain runs to 528 residues: Esterase PE16 (528 aa).

The 93-residue stretch at 1–93 (MSFVFAVPEM…AGWYVDAEAA (93 aa)) folds into the PE domain. Residues 94–143 (NAALVDTAATGASELGSGGRTALILGSTGTPRPPFDYMQQVYDRYIAPHY) form a linker region. The region spanning 149–369 (SGLYTPAQFQ…LRAIIELGYD (221 aa)) is the PE-PPE domain. The active site involves S199. The helical transmembrane segment at 503–523 (IALLVFAAGIPAVAAVAILTG) threads the bilayer.

Belongs to the mycobacterial PE family.

It localises to the membrane. It carries out the reaction a hexanoate ester + H2O = an aliphatic alcohol + hexanoate + H(+). The enzyme catalyses an octanoate ester + H2O = an aliphatic alcohol + octanoate + H(+). It catalyses the reaction a butanoate ester + H2O = an aliphatic alcohol + butanoate + H(+). Esterase activity is significantly inhibited by the serine modifier phenylmethylsulfonyl fluoride (PMSF). Functionally, esterase that hydrolyzes short to medium chain fatty acid esters with the highest specific activity for p-nitrophenyl caproate (pNPC6). Has lower activity with p-nitrophenyl caprylate (pNPC8) and p-nitrophenyl butyrate (pNPC4). Has weak activity with p-nitrophenyl caprate (pNPC10) and p-nitrophenyl laurate (pNPC12). Does not possess lipolytic activity and cutinase activity. This Mycobacterium tuberculosis (strain ATCC 25618 / H37Rv) protein is Esterase PE16.